We begin with the raw amino-acid sequence, 167 residues long: Small heat shock protein C1 (167 aa).

Positions 59 to 167 constitute a sHSP domain; the sequence is PFYESNSIKS…EQDAKEIPIN (109 aa).

The protein belongs to the small heat shock protein (HSP20) family.

This is Small heat shock protein C1 (hspC1) from Rickettsia bellii (strain RML369-C).